We begin with the raw amino-acid sequence, 460 residues long: MKSAVENLTATRVKLNVEVPFEELKPSIDAAYKTVASQIQVPGFRKGKVPSKLIDQRVGRGYVLETAINDGLNGWYQAAVQETGVRPLSRPEVEITEVPDPSATDGELKFQVEIDVRPEIELPDYAGIKVEVAAAESSEADVDKSLDELRGRFGTLKSVERPAKNDDFLTIDITATIDGEDIDSAAGLSYQVGAGTMLEGLDEAVTGLSADEEAIFETTLVGGDHAGESAQVKVVVKAVKERELPEANDDFAQLASEFDTLAELREDLAKQAADSKVVEQGVEARDKVLDKLVELVEVPVPDSVVEEQIEAHFNPENAHGEGDHDTEEHRAEVKANTERAFQNEIILDAIADKEEVDVSQNELIDYIVTTASQYGMDPNQFAQIIDQSGQVPMMVSEVRRRKALAVVLGQAEVVDSEGNKVDLTDFVRPAGEAAAEEAAAGEANEEADVVASDDPAAVKF.

In terms of domain architecture, PPIase FKBP-type spans 166-245 (DDFLTIDITA…VKAVKERELP (80 aa)). Residues 434–460 (AAEEAAAGEANEEADVVASDDPAAVKF) are disordered. Low complexity predominate over residues 449 to 460 (VVASDDPAAVKF).

It belongs to the FKBP-type PPIase family. Tig subfamily.

Its subcellular location is the cytoplasm. It carries out the reaction [protein]-peptidylproline (omega=180) = [protein]-peptidylproline (omega=0). In terms of biological role, involved in protein export. Acts as a chaperone by maintaining the newly synthesized protein in an open conformation. Functions as a peptidyl-prolyl cis-trans isomerase. The polypeptide is Trigger factor (Paenarthrobacter aurescens (strain TC1)).